The chain runs to 787 residues: Putative pentatricopeptide repeat-containing protein At1g69350, mitochondrial (787 aa).

The transit peptide at 1–16 (MTQYMPLFRSCSSLRL) directs the protein to the mitochondrion. PPR repeat units follow at residues 33–63 (DPLP…FPYP), 64–98 (DSFM…TTQI), 99–134 (SKFV…GVDD), 135–165 (DAVI…MPVR), 166–200 (DLVA…GVEP), 201–235 (DAVT…MFDL), 236–266 (DETL…IAKK), 267–301 (NAVS…GIEP), 302–336 (NLVT…ELDP), 338–368 (YESL…VSDR), 369–403 (NIVA…RIKP), 404–434 (DAFT…VIRT), 438–468 (DEFV…IKHR), 469–503 (SVVT…YLEM), 504–534 (NEVT…LIIS), 538–568 (DLFT…MSSR), 569–603 (SIVS…GTKP), 604–638 (NEVV…GVSP), and 639–669 (NSEH…MPFL). Residues 674-749 (VWGSLVNGCR…VPGYSAIEID (76 aa)) are type E motif. Residues 750-780 (QKVFRFGAGEENRIQTDEIYRFLGNLQNLTN) form a type E(+) motif region.

The protein belongs to the PPR family. PCMP-E subfamily.

The protein resides in the mitochondrion. The polypeptide is Putative pentatricopeptide repeat-containing protein At1g69350, mitochondrial (PCMP-E66) (Arabidopsis thaliana (Mouse-ear cress)).